Reading from the N-terminus, the 1075-residue chain is Carbamoyl phosphate synthase large chain (1075 aa).

Positions 2-403 (PKRTDIKSIL…SLQKALRGLE (402 aa)) are carboxyphosphate synthetic domain. ATP is bound by residues Arg129, Arg169, Gly175, Gly176, Glu208, Leu210, Glu215, Gly241, Ile242, His243, Gln285, and Glu299. The 196-residue stretch at 133–328 (DIAMKKIGLD…IAKVAAKLAV (196 aa)) folds into the ATP-grasp 1 domain. Residues Gln285, Glu299, and Asn301 each coordinate Mg(2+). Mn(2+) is bound by residues Gln285, Glu299, and Asn301. The interval 404-553 (VGATGFDPKV…YSTYEDECEA (150 aa)) is oligomerization domain. Residues 554–936 (NPSIDRDKIM…AFAKAQLGSN (383 aa)) are carbamoyl phosphate synthetic domain. The ATP-grasp 2 domain maps to 679–870 (QHAVDRLKLK…LAKVAARVMA (192 aa)). Arg715, Arg754, Leu756, Glu761, Gly786, Val787, His788, Ser789, Gln829, and Glu841 together coordinate ATP. Mg(2+) contacts are provided by Gln829, Glu841, and Asn843. Mn(2+) is bound by residues Gln829, Glu841, and Asn843. The 139-residue stretch at 937-1075 (STMKKQGRAL…QEMHAQIKKS (139 aa)) folds into the MGS-like domain. The segment at 937–1075 (STMKKQGRAL…QEMHAQIKKS (139 aa)) is allosteric domain.

It belongs to the CarB family. Composed of two chains; the small (or glutamine) chain promotes the hydrolysis of glutamine to ammonia, which is used by the large (or ammonia) chain to synthesize carbamoyl phosphate. Tetramer of heterodimers (alpha,beta)4. The cofactor is Mg(2+). Mn(2+) serves as cofactor.

The enzyme catalyses hydrogencarbonate + L-glutamine + 2 ATP + H2O = carbamoyl phosphate + L-glutamate + 2 ADP + phosphate + 2 H(+). The catalysed reaction is hydrogencarbonate + NH4(+) + 2 ATP = carbamoyl phosphate + 2 ADP + phosphate + 2 H(+). It functions in the pathway amino-acid biosynthesis; L-arginine biosynthesis; carbamoyl phosphate from bicarbonate: step 1/1. The protein operates within pyrimidine metabolism; UMP biosynthesis via de novo pathway; (S)-dihydroorotate from bicarbonate: step 1/3. Functionally, large subunit of the glutamine-dependent carbamoyl phosphate synthetase (CPSase). CPSase catalyzes the formation of carbamoyl phosphate from the ammonia moiety of glutamine, carbonate, and phosphate donated by ATP, constituting the first step of 2 biosynthetic pathways, one leading to arginine and/or urea and the other to pyrimidine nucleotides. The large subunit (synthetase) binds the substrates ammonia (free or transferred from glutamine from the small subunit), hydrogencarbonate and ATP and carries out an ATP-coupled ligase reaction, activating hydrogencarbonate by forming carboxy phosphate which reacts with ammonia to form carbamoyl phosphate. This is Carbamoyl phosphate synthase large chain from Salmonella typhimurium (strain LT2 / SGSC1412 / ATCC 700720).